The sequence spans 314 residues: tRNA(Ile)-lysidine synthase, chloroplastic (314 aa).

Position 31–36 (31–36 (SGGQDS)) interacts with ATP.

The protein belongs to the tRNA(Ile)-lysidine synthase family.

It localises to the plastid. The protein localises to the chloroplast. The enzyme catalyses cytidine(34) in tRNA(Ile2) + L-lysine + ATP = lysidine(34) in tRNA(Ile2) + AMP + diphosphate + H(+). In terms of biological role, ligates lysine onto the cytidine present at position 34 of the AUA codon-specific tRNA(Ile) that contains the anticodon CAU, in an ATP-dependent manner. Cytidine is converted to lysidine, thus changing the amino acid specificity of the tRNA from methionine to isoleucine. This is tRNA(Ile)-lysidine synthase, chloroplastic from Cyanidium caldarium (Red alga).